The primary structure comprises 470 residues: Tubulin gamma chain (470 aa).

144-150 lines the GTP pocket; it reads AGGTGSG.

The protein belongs to the tubulin family.

It is found in the cytoplasm. The protein localises to the cytoskeleton. Its subcellular location is the microtubule organizing center. The protein resides in the spindle pole body. Tubulin is the major constituent of microtubules. The gamma chain is found at microtubule organizing centers (MTOC) such as the spindle poles or the centrosome, suggesting that it is involved in the minus-end nucleation of microtubule assembly. This chain is Tubulin gamma chain (TUB4), found in Eremothecium gossypii (strain ATCC 10895 / CBS 109.51 / FGSC 9923 / NRRL Y-1056) (Yeast).